The primary structure comprises 381 residues: ELMO domain-containing protein 3 (381 aa).

The tract at residues 1-31 is disordered; sequence MNEKSCSFHSKEELRDGQGERLSAGYSPSYD. Over residues 9–19 the composition is skewed to basic and acidic residues; it reads HSKEELRDGQG. Residues 170–324 form the ELMO domain; sequence VHGRVLQTIY…ELEVLAKKSP (155 aa).

As to expression, both isoform 1 and isoform 6 are widely expressed.

It is found in the cell projection. Its subcellular location is the stereocilium. It localises to the kinocilium. The protein resides in the cytoplasm. The protein localises to the cytoskeleton. In terms of biological role, acts as a GTPase-activating protein (GAP) for ARL2 with low specific activity. The chain is ELMO domain-containing protein 3 (ELMOD3) from Homo sapiens (Human).